A 609-amino-acid polypeptide reads, in one-letter code: Glutamine--fructose-6-phosphate aminotransferase [isomerizing] (609 aa).

Residue Cys2 is the Nucleophile; for GATase activity of the active site. The Glutamine amidotransferase type-2 domain occupies Cys2 to Arg218. 2 SIS domains span residues Ala286–Leu426 and Leu458–Pro599. Residue Lys604 is the For Fru-6P isomerization activity of the active site.

As to quaternary structure, homodimer.

The protein localises to the cytoplasm. It catalyses the reaction D-fructose 6-phosphate + L-glutamine = D-glucosamine 6-phosphate + L-glutamate. Its function is as follows. Catalyzes the first step in hexosamine metabolism, converting fructose-6P into glucosamine-6P using glutamine as a nitrogen source. This is Glutamine--fructose-6-phosphate aminotransferase [isomerizing] from Shigella flexneri.